The chain runs to 287 residues: U-megalopygitoxin(8)-Mo12 (287 aa).

A signal peptide spans 1-17; the sequence is MNLQYLILSLLSTTVYG. Histidine 284 is subject to Histidine amide.

This sequence belongs to the megalysin family. Post-translationally, contains 2 disulfide bonds. As to expression, expressed by the venom apparatus.

It is found in the secreted. Its subcellular location is the target cell membrane. In terms of biological role, may function as a large pore-forming protein. The chain is U-megalopygitoxin(8)-Mo12 from Megalopyge opercularis (Southern flannel moth).